Consider the following 338-residue polypeptide: Selenocysteine methyltransferase (338 aa).

The Hcy-binding domain occupies 1–327 (MSSPLITDFL…DTIRGIYKIL (327 aa)). 3 residues coordinate Zn(2+): cysteine 245, cysteine 312, and cysteine 313.

In terms of assembly, monomer. Requires Zn(2+) as cofactor. Present in all tissues tested.

The catalysed reaction is S-methyl-L-methionine + L-selenocysteine = Se-methyl-L-selenocysteine + L-methionine + H(+). Functionally, catalyzes the methylation of selenocysteine with S-methylmethionine as donor. Does not methylate cysteine. This chain is Selenocysteine methyltransferase (SMTA), found in Astragalus bisulcatus (Two-grooved milkvetch).